We begin with the raw amino-acid sequence, 2474 residues long: Serine/threonine-protein kinase TOR2 (2474 aa).

Residues 1 to 62 (MNKYINKYTT…NGPNDSGRVI (62 aa)) are disordered. The residue at position 10 (threonine 10) is a Phosphothreonine. Residues 25–36 (HRTRKKLTHKSH) are compositionally biased toward basic residues. The span at 43–56 (STTSNTDSNHNGPN) shows a compositional bias: polar residues. HEAT repeat units lie at residues 588–626 (YSLTEFVRLITISYIEHEDSSVRKLAALTSCDLFIKDDI), 636–674 (HSVSEVLSKLLMIAITDPVAEIRLEILQHLGSNFDPQLA), 676–710 (PDNLRLLFMALNDEIFGIQLEAIKIIGRLSSVNPA), 756–793 (PYIDPILDVILPKCQDASSAVASTALKVLGELSVVGGK), 797–835 (RYLKELMPLIINTFQDQSNSFKRDAALTTLGQLAASSGY), 841–879 (LDYPELLGILINILKTENNPHIRRGTVRLIGILGALDPY), 917–955 (YYPTVVIHNLMKILNDPSLSIHHTAAIQAIMHIFQNLGL), 1039–1076 (RFVPETLTFFLDILENDQSNKRIVPIRILKSLVTFGPN), 1079–1116 (DYSHLIMPIVVRMTEYSAGSLKKISIITLGRLAKNINL), 1118–1155 (EMSSRIVQALVRILNNGDRELTKATMNTLSLLLLQLGT), and 1292–1331 (SYQEDLIQALCKALSSSENPPEIYQMLLNLVEFMEHDDKP). Residues 1338–1922 (TLGKYAQKCH…VYPLMVAIKS (585 aa)) form the FAT domain. A PI3K/PI4K catalytic domain is found at 2097–2421 (FEPVFSVISS…EHKNAIRNAR (325 aa)). The G-loop stretch occupies residues 2103–2109 (VISSKQR). A catalytic loop region spans residues 2276-2284 (GLGDRHPSN). The segment at 2296–2321 (HIDFGDCFEAAILREKFPEKVPFRLT) is activation loop. An FATC domain is found at 2442–2474 (NDLDVPEQVDKLIQQATSVENLCQHYIGWCPFW).

The protein belongs to the PI3/PI4-kinase family. In terms of assembly, the target of rapamycin complex 1 (TORC1) is composed of at least KOG1, LST8, TCO89 and either TOR1 (TORC1-A) or TOR2 (TORC1-B). TORC1 binds to and is inhibited by FKBP-rapamycin. Interacts with PIB2; following activation of PIB2 by glutamine. The target of rapamycin complex 2 (TORC2) is composed of at least AVO1, AVO2, BIT61, LST8, TOR2 and TSC11. TORC2 forms a homodimer. Contrary to TORC1, TORC2 does not bind to and is not sensitive to FKBP-rapamycin. Interacts with SLM1 and SLM2.

The protein resides in the cell membrane. It is found in the vacuole membrane. The catalysed reaction is L-seryl-[protein] + ATP = O-phospho-L-seryl-[protein] + ADP + H(+). It catalyses the reaction L-threonyl-[protein] + ATP = O-phospho-L-threonyl-[protein] + ADP + H(+). The enzyme catalyses a 1,2-diacyl-sn-glycero-3-phospho-(1D-myo-inositol) + ATP = a 1,2-diacyl-sn-glycero-3-phospho-(1D-myo-inositol 4-phosphate) + ADP + H(+). Its function is as follows. Phosphatidylinositol 3-kinase homolog, component of both TORC1 and TORC2. TORC1 regulates multiple cellular processes to control cell growth in response to environmental signals. Nutrient limitation and environmental stress signals cause inactivation of TORC1. Active TORC1 positively controls ribosome biogenesis via control of rRNA, ribosomal protein and tRNA gene expression, and rRNA processing. TORC1 positively controls protein biosynthesis by regulation of mRNA stability, translation initiation factor activity, and high-affinity amino acid permeases that serve to provide amino acids for use by the translation machinery. TORC1 also promotes growth by sequestering a number of nutrient and general stress-responsive transcription factors in the cytoplasm. TORC1 negatively controls macroautophagy, a process to recycle surplus cytoplasmic mass under nutrient starvation conditions. TORC1 controls many of these processes via TIP41-TAP42-mediated inhibition of the type 2A-related phosphatases PP2A and SIT4. In nutrient-rich conditions, responsible for the phosphorylation of AGC S6 kinase (S6K) YPK3, activating YPK3 kinase activity and promoting phosphorylation of ribosomal protein S6. Phosphorylates kinase SCH9 at 6 amino acids in the C-terminus, activating SCH9 kinase activity to properly regulate ribosome biogenesis, translation initiation, and entry into stationary phase. TORC2 regulates cell cycle-dependent polarization of the actin-cytoskeleton, cell wall integrity, and receptor endocytosis. TORC2 controls polarity of the actin cytoskeleton, which is required for orienting the secretory pathway toward discrete growth sites, via the RHO1/PKC1/MAPK cell integrity pathway by activating the RHO1 guanine nucleotide exchange factor ROM2. TORC2 phosphorylates the AGC kinase YPK2, an upstream effector of the cell integrity pathway. TORC2 negatively regulates calcineurin-dependent stress signaling via phosphorylation of its effector SLM1-SLM2. The sequence is that of Serine/threonine-protein kinase TOR2 (TOR2) from Saccharomyces cerevisiae (strain ATCC 204508 / S288c) (Baker's yeast).